The following is a 583-amino-acid chain: Steryl-sulfatase (583 aa).

An N-terminal signal peptide occupies residues 1-21 (MPLRKMKIPFLLLFFLWEAES). Residues 22–184 (HAASRPNIIL…GSVFTTGFKR (163 aa)) are Lumenal-facing. Ca(2+)-binding residues include Asp-35 and Asp-36. The N-linked (GlcNAc...) asparagine glycan is linked to Asn-47. A Ca(2+)-binding site is contributed by Cys-75. Cys-75 acts as the Nucleophile in catalysis. Residue Cys-75 is modified to 3-oxoalanine (Cys). The active site involves His-136. 2 cysteine pairs are disulfide-bonded: Cys-141/Cys-148 and Cys-170/Cys-242. A helical membrane pass occupies residues 185-208 (LVFLPLQIVGVTLLTLAALNCLGL). The Cytoplasmic segment spans residues 209-212 (LHVP). The chain crosses the membrane as a helical span at residues 213 to 234 (LGVFFSLLFLAALILTLFLGFL). Residues 235-583 (HYFRPLNCFM…REKQDKRLSR (349 aa)) lie on the Lumenal side of the membrane. N-linked (GlcNAc...) asparagine glycosylation occurs at Asn-259. Ca(2+)-binding residues include Asp-342 and Gln-343. Intrachain disulfides connect Cys-446–Cys-489, Cys-481–Cys-487, Cys-562–Cys-570, and Cys-563–Cys-572.

It belongs to the sulfatase family. Homodimer. It depends on Ca(2+) as a cofactor. In terms of processing, the conversion to 3-oxoalanine (also known as C-formylglycine, FGly), of a serine or cysteine residue in prokaryotes and of a cysteine residue in eukaryotes, is critical for catalytic activity.

The protein localises to the cytoplasmic vesicle. Its subcellular location is the secretory vesicle. It localises to the microneme membrane. The protein resides in the endoplasmic reticulum membrane. The catalysed reaction is dehydroepiandrosterone 3-sulfate + H2O = 3beta-hydroxyandrost-5-en-17-one + sulfate + H(+). It catalyses the reaction estrone 3-sulfate + H2O = estrone + sulfate + H(+). Its function is as follows. Catalyzes the conversion of sulfated steroid precursors, such as dehydroepiandrosterone sulfate (DHEA-S) and estrone sulfate to the free steroid. This chain is Steryl-sulfatase (STS), found in Homo sapiens (Human).